The chain runs to 673 residues: UvrABC system protein B (673 aa).

A Helicase ATP-binding domain is found at 26 to 183 (EGLEDGLAHQ…RRLAELQYTR (158 aa)). 39-46 (GVTGSGKT) serves as a coordination point for ATP. The Beta-hairpin signature appears at 92-115 (YYDYYQPEAYVPSSDTFIEKDASV). The Helicase C-terminal domain maps to 431–597 (QVDDLLSEIR…GLNKKVVDIL (167 aa)). Residues 633-668 (QQKIHELEGQMMQHAQNLEFEEAAQIRDQLHQLREL) form the UVR domain.

It belongs to the UvrB family. Forms a heterotetramer with UvrA during the search for lesions. Interacts with UvrC in an incision complex.

Its subcellular location is the cytoplasm. The UvrABC repair system catalyzes the recognition and processing of DNA lesions. A damage recognition complex composed of 2 UvrA and 2 UvrB subunits scans DNA for abnormalities. Upon binding of the UvrA(2)B(2) complex to a putative damaged site, the DNA wraps around one UvrB monomer. DNA wrap is dependent on ATP binding by UvrB and probably causes local melting of the DNA helix, facilitating insertion of UvrB beta-hairpin between the DNA strands. Then UvrB probes one DNA strand for the presence of a lesion. If a lesion is found the UvrA subunits dissociate and the UvrB-DNA preincision complex is formed. This complex is subsequently bound by UvrC and the second UvrB is released. If no lesion is found, the DNA wraps around the other UvrB subunit that will check the other stand for damage. The polypeptide is UvrABC system protein B (Salmonella arizonae (strain ATCC BAA-731 / CDC346-86 / RSK2980)).